Here is a 528-residue protein sequence, read N- to C-terminus: MMLPRNSPHRTESTLAYNNNNSNNNNNNNGSSLFQRKPLAPINSEFKISKPQHIKPTTHSHTFTTPTPKTRNTATTTTNNNNRNNHQYRNPNLNTSLVFTPTKNSSSSSSSHSSSLLSSSPFVEEPENQPESNHTRATSHYRTTSTSQYKSSANKDASHSLITSSKRKTSTKQTSESTNPKRRTTTTATQNTNNNKILNPSLSSSTIRFSTVSSSTSSSTTSSSSSSHTSPKPQQQLTLDDFEFGKILGKGKLGRVYCVKHKQSGLIFALKVMSKSEIMNLKLEKSLRREIEIQSNLYHINITRLYSWFHDSINIYLLLEYSIEGELYTHLKKLKRFDNIMASNYIFQITQALIFLHQRGIIHRDLKPENIMVSLDNQLKLSDFGWSVQINQNQNQNQIHNQTQTQKTPHQKKQKQKRLTICGTLDYLPPEMIESKSHDFSVDIWALGILCYELLVGKPPFEAINRNITYEKIAKVDIKYPSNLDVDAIDLISKLVVKDPNKRLSLKEVLNHNWIIKNKPKWPKNIYK.

2 disordered regions span residues 1–35 (MMLP…SLFQ) and 48–235 (ISKP…KPQQ). Low complexity-rich tracts occupy residues 18-29 (NNNNSNNNNNNN) and 59-94 (HSHT…PNLN). Residues 95–104 (TSLVFTPTKN) are compositionally biased toward polar residues. Over residues 105 to 120 (SSSSSSSHSSSLLSSS) the composition is skewed to low complexity. Polar residues predominate over residues 129-155 (QPESNHTRATSHYRTTSTSQYKSSANK). The span at 185 to 230 (TTTATQNTNNNKILNPSLSSSTIRFSTVSSSTSSSTTSSSSSSHTS) shows a compositional bias: low complexity. Residues 242–515 (FEFGKILGKG…LKEVLNHNWI (274 aa)) enclose the Protein kinase domain. ATP is bound by residues 248-256 (LGKGKLGRV) and K271. The active-site Proton acceptor is the D365.

This sequence belongs to the protein kinase superfamily. Ser/Thr protein kinase family. Aurora subfamily.

It localises to the nucleus. Its subcellular location is the cytoplasm. The protein resides in the cytoskeleton. The protein localises to the spindle. It is found in the chromosome. It localises to the centromere. Its subcellular location is the kinetochore. It carries out the reaction L-seryl-[protein] + ATP = O-phospho-L-seryl-[protein] + ADP + H(+). The catalysed reaction is L-threonyl-[protein] + ATP = O-phospho-L-threonyl-[protein] + ADP + H(+). Functionally, component of the chromosomal passenger complex (CPC), a complex that acts as a key regulator of chromosome segregation and cytokinesis. Has a role in error-correction of aberrent kinetochore-microtubule attachments to ensure that sister kinetochores become bioriented and connect to opposite poles by promoting spindle assembly checkpoint signaling. The chain is Aurora kinase (IPL1) from Candida albicans (strain SC5314 / ATCC MYA-2876) (Yeast).